Reading from the N-terminus, the 501-residue chain is MENLTTAQFLHRATLLKKPPPPPWNLNSSFLTSTSYSIPRPSSLRRSLPLSINGDATQPTSLLHHHRFLSSLTRRLSLSGSCPLRLLQEDGDWSKDHFWAVIRFLRQSSRLHEILPVFDTWKNLEPSRISENNYERIIRFLCEEKSMSEAIRAFRSMIDDHELSPSLEIYNSIIHSYADDGKFEEAMFYLNHMKENGLLPITETYDGLIEAYGKWKMYDEIVLCLKRMESDGCVRDHVTYNLLIREFSRGGLLKRMEQMYQSLMSRKMTLEPSTLLSMLEAYAEFGLIEKMEETCNKIIRFGISLDEGLVRKLANVYIENLMFSRLDDLGRGISASRTRRTELAWCLRLLCHARLVSRKGLDYVVKEMEEARVPWNTTFANIALLAYSKMGDFTSIELLLSELRIKHVKLDLVTVGIVFDLSEARFDGTGVFMTWKKIGFLDKPVEMKTDPLVHAAFGKGQFLRSCEEVKNQSLGTRDGESKSWTYQYLMELVVKNQKTVP.

The N-terminal 88 residues, 1-88, are a transit peptide targeting the chloroplast; the sequence is MENLTTAQFL…SGSCPLRLLQ (88 aa). PPR repeat units follow at residues 130 to 160, 166 to 200, 201 to 235, 236 to 270, and 271 to 305; these read SENN…MIDD, SLEI…GLLP, ITET…GCVR, DHVT…KMTL, and EPST…GISL.

The protein belongs to the PPR family. P subfamily.

The protein localises to the plastid. It localises to the chloroplast. The polypeptide is Pentatricopeptide repeat-containing protein At4g14190, chloroplastic (Arabidopsis thaliana (Mouse-ear cress)).